We begin with the raw amino-acid sequence, 612 residues long: Sulfite reductase [NADPH] hemoprotein beta-component (612 aa).

The disordered stretch occupies residues 1–26; it reads MDDHKPIETPDGPAVDTPGIGARRYE. Residues C469, C475, C514, and C518 each coordinate [4Fe-4S] cluster. Residue C518 participates in siroheme binding.

It belongs to the nitrite and sulfite reductase 4Fe-4S domain family. As to quaternary structure, alpha(8)-beta(8). The alpha component is a flavoprotein, the beta component is a hemoprotein. Siroheme is required as a cofactor. [4Fe-4S] cluster serves as cofactor.

The enzyme catalyses hydrogen sulfide + 3 NADP(+) + 3 H2O = sulfite + 3 NADPH + 4 H(+). The protein operates within sulfur metabolism; hydrogen sulfide biosynthesis; hydrogen sulfide from sulfite (NADPH route): step 1/1. Component of the sulfite reductase complex that catalyzes the 6-electron reduction of sulfite to sulfide. This is one of several activities required for the biosynthesis of L-cysteine from sulfate. The protein is Sulfite reductase [NADPH] hemoprotein beta-component of Methylorubrum extorquens (strain PA1) (Methylobacterium extorquens).